Consider the following 417-residue polypeptide: Serine hydroxymethyltransferase (417 aa).

(6S)-5,6,7,8-tetrahydrofolate-binding positions include L120 and 124-126 (GHL). K229 carries the N6-(pyridoxal phosphate)lysine modification. Residue 354–356 (SPF) participates in (6S)-5,6,7,8-tetrahydrofolate binding.

It belongs to the SHMT family. In terms of assembly, homodimer. It depends on pyridoxal 5'-phosphate as a cofactor.

The protein localises to the cytoplasm. The enzyme catalyses (6R)-5,10-methylene-5,6,7,8-tetrahydrofolate + glycine + H2O = (6S)-5,6,7,8-tetrahydrofolate + L-serine. It participates in one-carbon metabolism; tetrahydrofolate interconversion. Its pathway is amino-acid biosynthesis; glycine biosynthesis; glycine from L-serine: step 1/1. Catalyzes the reversible interconversion of serine and glycine with tetrahydrofolate (THF) serving as the one-carbon carrier. This reaction serves as the major source of one-carbon groups required for the biosynthesis of purines, thymidylate, methionine, and other important biomolecules. Also exhibits THF-independent aldolase activity toward beta-hydroxyamino acids, producing glycine and aldehydes, via a retro-aldol mechanism. This is Serine hydroxymethyltransferase from Acinetobacter radioresistens.